The sequence spans 495 residues: N-succinylglutamate 5-semialdehyde dehydrogenase (495 aa).

220-225 (GSAGTG) contributes to the NAD(+) binding site. Residues Glu243 and Cys277 contribute to the active site.

Belongs to the aldehyde dehydrogenase family. AstD subfamily.

The enzyme catalyses N-succinyl-L-glutamate 5-semialdehyde + NAD(+) + H2O = N-succinyl-L-glutamate + NADH + 2 H(+). It participates in amino-acid degradation; L-arginine degradation via AST pathway; L-glutamate and succinate from L-arginine: step 4/5. In terms of biological role, catalyzes the NAD-dependent reduction of succinylglutamate semialdehyde into succinylglutamate. The sequence is that of N-succinylglutamate 5-semialdehyde dehydrogenase from Enterobacter sp. (strain 638).